The chain runs to 87 residues: Mitochondrial import inner membrane translocase subunit TIM8 (87 aa).

The Twin CX3C motif motif lies at Cys-44 to Cys-68. Cystine bridges form between Cys-44–Cys-68 and Cys-48–Cys-64.

Belongs to the small Tim family. In terms of assembly, heterohexamer; composed of 3 copies of TIM8 and 3 copies of TIM13, named soluble 70 kDa complex. Associates with the TIM22 complex, whose core is composed of TIM18, TIM22 and TIM54. Interacts with the transmembrane regions of multi-pass transmembrane proteins in transit.

The protein resides in the mitochondrion inner membrane. It localises to the mitochondrion intermembrane space. In terms of biological role, mitochondrial intermembrane chaperone that participates in the import and insertion of some multi-pass transmembrane proteins into the mitochondrial inner membrane. Also required for the transfer of beta-barrel precursors from the TOM complex to the sorting and assembly machinery (SAM complex) of the outer membrane. Acts as a chaperone-like protein that protects the hydrophobic precursors from aggregation and guide them through the mitochondrial intermembrane space. The TIM8-TIM13 complex is non essential and only mediates the import of few proteins under precise conditions, while the predominant TIM9-TIM10 70 kDa complex is crucial and mediates the import of much more proteins. Strictly required for import of TIM23 in some conditions, when a low membrane potential exists in the mitochondria. This Saccharomyces cerevisiae (strain ATCC 204508 / S288c) (Baker's yeast) protein is Mitochondrial import inner membrane translocase subunit TIM8 (TIM8).